Reading from the N-terminus, the 343-residue chain is Trace amine-associated receptor 3 (343 aa).

Topologically, residues 1–35 are extracellular; sequence MDLIYIPEDLSSCPKFGNKSCPPTNRSFRVRMIMY. Residues N18 and N25 are each glycosylated (N-linked (GlcNAc...) asparagine). Cystine bridges form between C21–C185 and C104–C189. Residues 36–56 traverse the membrane as a helical segment; that stretch reads LFMTGAMVITIFGNLVIIISI. Over 57–68 the chain is Cytoplasmic; sequence SHFKQLHSPTNF. The chain crosses the membrane as a helical span at residues 69–89; that stretch reads LILSMATTDFLLGFVIMPYSM. Topologically, residues 90 to 150 are extracellular; sequence VRSVESCWYF…TTMTVSMIKR (61 aa). A helical transmembrane segment spans residues 151 to 168; that stretch reads LLAFCWAAPALFSFGLVL. Residues 169–172 lie on the Cytoplasmic side of the membrane; sequence SEAN. The interval 173-186 is extracellular Loop 2 (ECL2); sequence VSGMQSYEILVACF. Residues 173–193 traverse the membrane as a helical segment; sequence VSGMQSYEILVACFNFCALTF. The Extracellular segment spans residues 194–198; it reads NKFWG. Residues 199–223 form a helical membrane-spanning segment; that stretch reads TILFTTCFFTPGSIMVGIYGKIFIV. Residues 224 to 257 are Cytoplasmic-facing; the sequence is SRRHARALSDMPANTKGAVGKNLSKKKDRKAAKT. Residues 258-278 traverse the membrane as a helical segment; sequence LGIVMGVFLACWLPCFLAVLI. Over 279–287 the chain is Extracellular; the sequence is DPYLDYSTP. The helical transmembrane segment at 288 to 308 threads the bilayer; it reads IIVLDLLVWLGYFNSTCNPLI. Topologically, residues 309-343 are cytoplasmic; sequence HGFFYPWFRKALQFIVSGKIFRSNSDTANLFPEAH.

Belongs to the G-protein coupled receptor 1 family. As to expression, specifically expressed in neurons of the olfactory epithelium.

The protein localises to the cell membrane. In terms of biological role, olfactory receptor activated by several primary trace amines, including isoamylamine. Activated by isoamylamine and cyclohexylamine, but not to the corresponding alcohols, isoamylalcohol and cyclohexanol. This receptor is probably mediated by the G(s)-class of G-proteins which activate adenylate cyclase. The sequence is that of Trace amine-associated receptor 3 from Mus musculus (Mouse).